Here is a 253-residue protein sequence, read N- to C-terminus: MKSESESHAQSQIDSLMAVIPAAGSGSRMQANIPKQFLMVANRTLLEYSIEAVLKDARVEQVFVAVSDSNAEYLIELKKSLPTKVHFVTGGNSRAESVLAGVKVAVSQGATHVLVHDAARPCLPKKALTAVINTGLKDPQGAILAIPVRDSLKRAVISVNDETGVTHIESSVDREALWQAQTPQVFNAERLQQAIEHMGALNPQLTDEASAMQWCGFQPALIPGSIRNLKVTHPEDFECVRDWLLADNNDHKN.

Belongs to the IspD/TarI cytidylyltransferase family. IspD subfamily.

The enzyme catalyses 2-C-methyl-D-erythritol 4-phosphate + CTP + H(+) = 4-CDP-2-C-methyl-D-erythritol + diphosphate. Its pathway is isoprenoid biosynthesis; isopentenyl diphosphate biosynthesis via DXP pathway; isopentenyl diphosphate from 1-deoxy-D-xylulose 5-phosphate: step 2/6. Catalyzes the formation of 4-diphosphocytidyl-2-C-methyl-D-erythritol from CTP and 2-C-methyl-D-erythritol 4-phosphate (MEP). The sequence is that of 2-C-methyl-D-erythritol 4-phosphate cytidylyltransferase from Idiomarina loihiensis (strain ATCC BAA-735 / DSM 15497 / L2-TR).